A 594-amino-acid polypeptide reads, in one-letter code: Phostensin (594 aa).

2 stretches are compositionally biased toward basic and acidic residues: residues 18–33 (EEAA…RDRL) and 109–125 (VLGD…ERRS). 2 disordered regions span residues 18–238 (EEAA…PTDV) and 294–485 (VQDI…GKKR). Ser-126, Ser-134, Ser-174, and Ser-194 each carry phosphoserine. Composition is skewed to basic and acidic residues over residues 133–155 (QSPK…DRRL) and 167–190 (SLRD…EAQK). A Phosphothreonine modification is found at Thr-198. Ser-224 bears the Phosphoserine mark. The segment covering 353 to 364 (EAEEEAEKEEAE) has biased composition (acidic residues). A compositionally biased stretch (pro residues) spans 403-421 (PRPPTPAPLSPPPSAPTAP). A Phosphoserine modification is found at Ser-412. Lys-437 carries the post-translational modification N6-acetyllysine. The residue at position 510 (Ser-510) is a Phosphoserine. Residues 531–577 (YQYPSESSVLEDLGPEPETPIAPLATQPDEEEEEEEEEEELLLQPGL) form a disordered region. The span at 558–571 (PDEEEEEEEEEEEL) shows a compositional bias: acidic residues.

In terms of assembly, interacts with Protein phosphatase 1 (PP1).

It is found in the cytoplasm. The protein resides in the cytoskeleton. May target protein phosphatase 1 to F-actin cytoskeleton. In Mus musculus (Mouse), this protein is Phostensin (Ppp1r18).